The following is a 352-amino-acid chain: Rhodopsin (352 aa).

Topologically, residues 1–36 (MNGTEGPFFYIPMVNTTGIVRSPYEYPQYYLVNPAA) are extracellular. Residues N2 and N15 are each glycosylated (N-linked (GlcNAc...) asparagine). Residues 37–61 (YAALGAYMFFLILTGFPINFLTLYV) form a helical membrane-spanning segment. Topologically, residues 62–73 (TLEHKKLRTALN) are cytoplasmic. A helical transmembrane segment spans residues 74–96 (LILLNLAVADLFMVFGGFTTTMY). The Extracellular portion of the chain corresponds to 97–110 (TSMHGYFVLGRLGC). A disulfide bridge connects residues C110 and C187. A helical membrane pass occupies residues 111–133 (NVEGFFATLGGEIALWSLVVLAV). Residues 134-136 (ERW) carry the 'Ionic lock' involved in activated form stabilization motif. The Cytoplasmic portion of the chain corresponds to 134–152 (ERWVVVCKPISNFRFTENH). Residues 153-173 (AIMGVAFSWIMAATCAVPPLV) traverse the membrane as a helical segment. Over 174–202 (GWSRYIPEGMQCSCGVDYYTRAEGFNNES) the chain is Extracellular. The helical transmembrane segment at 203 to 224 (FVIYMFIVHFLAPLIVIFFCYG) threads the bilayer. Over 225–252 (RLLCAVKEAAAAQQESETTQRAEREVTR) the chain is Cytoplasmic. The helical transmembrane segment at 253–274 (MVIIMVIGFLTSWLPYASVAWY) threads the bilayer. At 275 to 286 (IFTHQGTEFGPL) the chain is on the extracellular side. Residues 287 to 308 (FMTIPAFFAKSSALYNPMIYIC) form a helical membrane-spanning segment. Position 296 is an N6-(retinylidene)lysine (K296). The Cytoplasmic segment spans residues 309 to 352 (MNKQFRHCMITTLCCGKNPFEEEEGASTTKTEASSVSSSSVSPA). 2 S-palmitoyl cysteine lipidation sites follow: C322 and C323. The interval 331–352 (EEGASTTKTEASSVSSSSVSPA) is disordered. Residues 342 to 352 (SSVSSSSVSPA) are compositionally biased toward low complexity.

The protein belongs to the G-protein coupled receptor 1 family. Opsin subfamily. In terms of processing, phosphorylated on some or all of the serine and threonine residues present in the C-terminal region. Post-translationally, contains one covalently linked retinal chromophore.

It is found in the membrane. It localises to the cell projection. Its subcellular location is the cilium. The protein localises to the photoreceptor outer segment. In terms of biological role, photoreceptor required for image-forming vision at low light intensity. While most salt water fish species use retinal as chromophore, most freshwater fish use 3-dehydroretinal, or a mixture of retinal and 3-dehydroretinal. Light-induced isomerization of 11-cis to all-trans retinal triggers a conformational change that activates signaling via G-proteins. Subsequent receptor phosphorylation mediates displacement of the bound G-protein alpha subunit by arrestin and terminates signaling. This Pomatoschistus minutus (Sand goby) protein is Rhodopsin (rho).